The primary structure comprises 263 residues: Syntaxin pep12 (263 aa).

Residues 140–159 (RNVSLSNNSSGQRQPLTESK) are disordered. The segment covering 142 to 159 (VSLSNNSSGQRQPLTESK) has biased composition (polar residues). 2 positions are modified to phosphoserine: Ser148 and Ser163. Residues 169–231 (QRLINERQGE…KNASRQLQIA (63 aa)) form the t-SNARE coiled-coil homology domain.

This sequence belongs to the syntaxin family.

Its subcellular location is the endoplasmic reticulum. Has a role in vesicle-mediated transport but not with protein transport from Golgi to vesicle. This chain is Syntaxin pep12 (pep12), found in Schizosaccharomyces pombe (strain 972 / ATCC 24843) (Fission yeast).